The following is a 347-amino-acid chain: Tyrosine recombinase XerC 2 (347 aa).

One can recognise a Core-binding (CB) domain in the interval 17–108 (LVLTRYMEAH…PLKTWFKWLA (92 aa)). The 189-residue stretch at 125 to 313 (KLPKHLPRAI…SIEHLRAIHD (189 aa)) folds into the Tyr recombinase domain. Residues Arg-170, Lys-195, His-265, Arg-268, and His-291 contribute to the active site. Tyr-300 functions as the O-(3'-phospho-DNA)-tyrosine intermediate in the catalytic mechanism.

It belongs to the 'phage' integrase family.

It localises to the cytoplasm. Site-specific tyrosine recombinase, which acts by catalyzing the cutting and rejoining of the recombining DNA molecules. This is Tyrosine recombinase XerC 2 from Ralstonia nicotianae (strain ATCC BAA-1114 / GMI1000) (Ralstonia solanacearum).